We begin with the raw amino-acid sequence, 238 residues long: tRNA (guanine-N(7)-)-methyltransferase (238 aa).

A compositionally biased stretch (polar residues) spans 1–12; it reads MTDTAENQTPND. The interval 1–20 is disordered; that stretch reads MTDTAENQTPNDRQAGHPRS. Positions 70, 95, 122, and 145 each coordinate S-adenosyl-L-methionine. Asp145 is a catalytic residue. Substrate-binding positions include Lys149, Asp181, and 216 to 219; that span reads TKFE.

The protein belongs to the class I-like SAM-binding methyltransferase superfamily. TrmB family.

It catalyses the reaction guanosine(46) in tRNA + S-adenosyl-L-methionine = N(7)-methylguanosine(46) in tRNA + S-adenosyl-L-homocysteine. The protein operates within tRNA modification; N(7)-methylguanine-tRNA biosynthesis. Catalyzes the formation of N(7)-methylguanine at position 46 (m7G46) in tRNA. The chain is tRNA (guanine-N(7)-)-methyltransferase from Neisseria meningitidis serogroup C (strain 053442).